A 95-amino-acid polypeptide reads, in one-letter code: Large ribosomal subunit protein eL30 (95 aa).

This sequence belongs to the eukaryotic ribosomal protein eL30 family.

This Methanospirillum hungatei JF-1 (strain ATCC 27890 / DSM 864 / NBRC 100397 / JF-1) protein is Large ribosomal subunit protein eL30.